The primary structure comprises 307 residues: Ribosomal protein L11 methyltransferase (307 aa).

Positions 156, 177, 199, and 243 each coordinate S-adenosyl-L-methionine.

This sequence belongs to the methyltransferase superfamily. PrmA family.

Its subcellular location is the cytoplasm. It carries out the reaction L-lysyl-[protein] + 3 S-adenosyl-L-methionine = N(6),N(6),N(6)-trimethyl-L-lysyl-[protein] + 3 S-adenosyl-L-homocysteine + 3 H(+). Methylates ribosomal protein L11. This Syntrophomonas wolfei subsp. wolfei (strain DSM 2245B / Goettingen) protein is Ribosomal protein L11 methyltransferase.